The sequence spans 130 residues: Small ribosomal subunit protein uS9 (130 aa).

Belongs to the universal ribosomal protein uS9 family.

This chain is Small ribosomal subunit protein uS9, found in Shewanella halifaxensis (strain HAW-EB4).